The following is a 431-amino-acid chain: UDP-N-acetylmuramate--L-alanine ligase (431 aa).

108 to 114 (GSHGKTS) is an ATP binding site.

This sequence belongs to the MurCDEF family.

The protein localises to the cytoplasm. The enzyme catalyses UDP-N-acetyl-alpha-D-muramate + L-alanine + ATP = UDP-N-acetyl-alpha-D-muramoyl-L-alanine + ADP + phosphate + H(+). It participates in cell wall biogenesis; peptidoglycan biosynthesis. In terms of biological role, cell wall formation. This is UDP-N-acetylmuramate--L-alanine ligase from Macrococcus caseolyticus (strain JCSC5402) (Macrococcoides caseolyticum).